The primary structure comprises 465 residues: Argininosuccinate lyase (465 aa).

It belongs to the lyase 1 family. Argininosuccinate lyase subfamily.

The protein resides in the cytoplasm. It carries out the reaction 2-(N(omega)-L-arginino)succinate = fumarate + L-arginine. The protein operates within amino-acid biosynthesis; L-arginine biosynthesis; L-arginine from L-ornithine and carbamoyl phosphate: step 3/3. The sequence is that of Argininosuccinate lyase from Deinococcus geothermalis (strain DSM 11300 / CIP 105573 / AG-3a).